A 636-amino-acid polypeptide reads, in one-letter code: Chaperone protein HtpG (636 aa).

Residues 1 to 329 (MSKEHGAAAE…TEDLPLNISR (329 aa)) form an a; substrate-binding region. The tract at residues 330 to 550 (ETLQENALIA…DGGMTASMEK (221 aa)) is b. Positions 551–636 (LMRVMNKDES…TGWYAEVRKL (86 aa)) are c.

The protein belongs to the heat shock protein 90 family. As to quaternary structure, homodimer.

Its subcellular location is the cytoplasm. In terms of biological role, molecular chaperone. Has ATPase activity. This Oleidesulfovibrio alaskensis (strain ATCC BAA-1058 / DSM 17464 / G20) (Desulfovibrio alaskensis) protein is Chaperone protein HtpG.